The primary structure comprises 336 residues: Glycerol-3-phosphate dehydrogenase [NAD(P)+] (336 aa).

NADPH is bound by residues S14, W15, R35, R36, and K109. Sn-glycerol 3-phosphate contacts are provided by K109 and G139. Residue A143 coordinates NADPH. 5 residues coordinate sn-glycerol 3-phosphate: K194, D247, S257, R258, and N259. Catalysis depends on K194, which acts as the Proton acceptor. R258 contributes to the NADPH binding site. E284 is a binding site for NADPH.

This sequence belongs to the NAD-dependent glycerol-3-phosphate dehydrogenase family.

The protein resides in the cytoplasm. The catalysed reaction is sn-glycerol 3-phosphate + NAD(+) = dihydroxyacetone phosphate + NADH + H(+). The enzyme catalyses sn-glycerol 3-phosphate + NADP(+) = dihydroxyacetone phosphate + NADPH + H(+). Its pathway is membrane lipid metabolism; glycerophospholipid metabolism. In terms of biological role, catalyzes the reduction of the glycolytic intermediate dihydroxyacetone phosphate (DHAP) to sn-glycerol 3-phosphate (G3P), the key precursor for phospholipid synthesis. The polypeptide is Glycerol-3-phosphate dehydrogenase [NAD(P)+] (Streptomyces coelicolor (strain ATCC BAA-471 / A3(2) / M145)).